The sequence spans 182 residues: NADH-quinone oxidoreductase subunit B (182 aa).

The [4Fe-4S] cluster site is built by cysteine 46, cysteine 47, cysteine 112, and cysteine 141.

The protein belongs to the complex I 20 kDa subunit family. NDH-1 is composed of 14 different subunits. Subunits NuoB, C, D, E, F, and G constitute the peripheral sector of the complex. Requires [4Fe-4S] cluster as cofactor.

Its subcellular location is the cell inner membrane. It carries out the reaction a quinone + NADH + 5 H(+)(in) = a quinol + NAD(+) + 4 H(+)(out). Its function is as follows. NDH-1 shuttles electrons from NADH, via FMN and iron-sulfur (Fe-S) centers, to quinones in the respiratory chain. The immediate electron acceptor for the enzyme in this species is believed to be a menaquinone. Couples the redox reaction to proton translocation (for every two electrons transferred, four hydrogen ions are translocated across the cytoplasmic membrane), and thus conserves the redox energy in a proton gradient. This chain is NADH-quinone oxidoreductase subunit B, found in Flavobacterium johnsoniae (strain ATCC 17061 / DSM 2064 / JCM 8514 / BCRC 14874 / CCUG 350202 / NBRC 14942 / NCIMB 11054 / UW101) (Cytophaga johnsonae).